A 157-amino-acid chain; its full sequence is ATP synthase subunit b (157 aa).

Residues 11–31 (LIMFAMFTWFCMKFIWPPIVM) form a helical membrane-spanning segment.

This sequence belongs to the ATPase B chain family. As to quaternary structure, F-type ATPases have 2 components, F(1) - the catalytic core - and F(0) - the membrane proton channel. F(1) has five subunits: alpha(3), beta(3), gamma(1), delta(1), epsilon(1). F(0) has three main subunits: a(1), b(2) and c(10-14). The alpha and beta chains form an alternating ring which encloses part of the gamma chain. F(1) is attached to F(0) by a central stalk formed by the gamma and epsilon chains, while a peripheral stalk is formed by the delta and b chains.

It localises to the cell inner membrane. In terms of biological role, f(1)F(0) ATP synthase produces ATP from ADP in the presence of a proton or sodium gradient. F-type ATPases consist of two structural domains, F(1) containing the extramembraneous catalytic core and F(0) containing the membrane proton channel, linked together by a central stalk and a peripheral stalk. During catalysis, ATP synthesis in the catalytic domain of F(1) is coupled via a rotary mechanism of the central stalk subunits to proton translocation. Its function is as follows. Component of the F(0) channel, it forms part of the peripheral stalk, linking F(1) to F(0). The chain is ATP synthase subunit b from Vesicomyosocius okutanii subsp. Calyptogena okutanii (strain HA).